We begin with the raw amino-acid sequence, 78 residues long: Small ribosomal subunit protein bS18 (78 aa).

Belongs to the bacterial ribosomal protein bS18 family. Part of the 30S ribosomal subunit. Forms a tight heterodimer with protein bS6.

Its function is as follows. Binds as a heterodimer with protein bS6 to the central domain of the 16S rRNA, where it helps stabilize the platform of the 30S subunit. In Acidothermus cellulolyticus (strain ATCC 43068 / DSM 8971 / 11B), this protein is Small ribosomal subunit protein bS18.